The following is a 290-amino-acid chain: Isopentenyl-diphosphate Delta-isomerase II (290 aa).

The region spanning 108 to 260 is the Nudix hydrolase domain; sequence MLHRAFTVFL…GLKLSPWFRL (153 aa). Residues cysteine 145 and glutamate 207 contribute to the active site.

It belongs to the IPP isomerase type 1 family.

It catalyses the reaction isopentenyl diphosphate = dimethylallyl diphosphate. Its pathway is isoprenoid biosynthesis; dimethylallyl diphosphate biosynthesis; dimethylallyl diphosphate from isopentenyl diphosphate: step 1/1. The protein operates within porphyrin-containing compound metabolism; chlorophyll biosynthesis. In terms of biological role, catalyzes the 1,3-allylic rearrangement of the homoallylic substrate isopentenyl (IPP) to its highly electrophilic allylic isomer, dimethylallyl diphosphate (DMAPP). This Clarkia xantiana (Gunsight clarkia) protein is Isopentenyl-diphosphate Delta-isomerase II (IPI2).